Reading from the N-terminus, the 912-residue chain is MFTKLATKMFGSKNAREIKRMRKVVTRINELEEQFGALSDTELQGKTAEFRRRLDEGEALDSLLPEVFATVREASRRVMGMRHYDVQLIGGMTLHEGRIAEMKTGEGKTLVATAAVYLNALPGKGVHVVTVNDYLARRDAEWMGKLYRFLGMQVGVVASGQPPEEKRAAYQADITYGTNNEFGFDYLRDNMAFSIEDKVQRGLNFAIVDEVDSILIDEARTPLIISGAAEDSSKLYQAVNALVPSLEKGEVSEEGESSGDFTIDEKSRQVELTESGHEKVEDLLLGQGLLKEGESLYSAANLSLLHHVHSALRAHHLFQKDVDYIVQGGQVVIVDEHTGRTMPGRRWSEGLHQAIEAKEGLKIQAESQTLASTTFQNYFRLYDKLAGMTGTADTEAFEFRQIYGLDVVVIPPNKPIQRIDYNDLVYLTQEEKFHAIIDEIKDVTAEGRPILVGTASIEASELLSMLLKKARIDHKILNAKQHESEALIIAQAGRPGAVTIATNMAGRGTDIVLGGNWEYEVAALDNPSEEEVARMKAEWTERHNQVLDAGGLHIIGTERHESRRIDNQLRGRAGRQGDPGSSRFFLSLEDNLMRIFAPERVKNLMQAMGMKKGEAIEHRMVTNAIEKSQRKVEGRNFDMRKTLLEYDDVANDQRTVIYEQRNEVMASNDISEMIDTIREDVVDSVVSEFIPPQSMPEQWDVQGLEAQLQSEMAIELPIQQWLKDDNKLYEDNLRQKILDAIVAEYKAKEEVAGSEAMRKFEKQVFLQVLDTLWKEHLSNMDHLRRGIHLRGYAQKNPKQEYKREAFNLFETMLDTMKRDVTRVLCHVRVQSQEEMAEIERRRKEELEREMARAKLRHEQASAAQAEGEGDDGQQGQQATPETFVRQERKVGRNEPCPCGSGKKYKQCCGKVS.

ATP is bound by residues Gln87, 105–109, and Asp510; that span reads GEGKT. The tract at residues 854–912 is disordered; sequence KLRHEQASAAQAEGEGDDGQQGQQATPETFVRQERKVGRNEPCPCGSGKKYKQCCGKVS. 4 residues coordinate Zn(2+): Cys896, Cys898, Cys907, and Cys908.

It belongs to the SecA family. Monomer and homodimer. Part of the essential Sec protein translocation apparatus which comprises SecA, SecYEG and auxiliary proteins SecDF-YajC and YidC. Zn(2+) is required as a cofactor.

It is found in the cell inner membrane. It localises to the cytoplasm. It catalyses the reaction ATP + H2O + cellular proteinSide 1 = ADP + phosphate + cellular proteinSide 2.. In terms of biological role, part of the Sec protein translocase complex. Interacts with the SecYEG preprotein conducting channel. Has a central role in coupling the hydrolysis of ATP to the transfer of proteins into and across the cell membrane, serving both as a receptor for the preprotein-SecB complex and as an ATP-driven molecular motor driving the stepwise translocation of polypeptide chains across the membrane. The polypeptide is Protein translocase subunit SecA (Marinobacter nauticus (strain ATCC 700491 / DSM 11845 / VT8) (Marinobacter aquaeolei)).